The sequence spans 532 residues: tRNA-2-methylthio-N(6)-dimethylallyladenosine synthase (532 aa).

The interval 1-21 (MTSTVAHGAGSAGPADDVEPM) is disordered. The 117-residue stretch at 24–140 (RTYQVRTYGC…LPALLDRARH (117 aa)) folds into the MTTase N-terminal domain. Residues C33, C69, C103, C177, C181, and C184 each coordinate [4Fe-4S] cluster. One can recognise a Radical SAM core domain in the interval 163 to 399 (RESAYAAWVS…VELQEQISLE (237 aa)). The TRAM domain maps to 402-470 (RAIVGQRVEL…PHHLIADGGI (69 aa)). The segment at 510 to 532 (TSCGSAGGCGSADGAGSSAGDPQ) is disordered. Residues 523–532 (GAGSSAGDPQ) show a composition bias toward low complexity.

Belongs to the methylthiotransferase family. MiaB subfamily. In terms of assembly, monomer. The cofactor is [4Fe-4S] cluster.

It is found in the cytoplasm. The enzyme catalyses N(6)-dimethylallyladenosine(37) in tRNA + (sulfur carrier)-SH + AH2 + 2 S-adenosyl-L-methionine = 2-methylsulfanyl-N(6)-dimethylallyladenosine(37) in tRNA + (sulfur carrier)-H + 5'-deoxyadenosine + L-methionine + A + S-adenosyl-L-homocysteine + 2 H(+). Functionally, catalyzes the methylthiolation of N6-(dimethylallyl)adenosine (i(6)A), leading to the formation of 2-methylthio-N6-(dimethylallyl)adenosine (ms(2)i(6)A) at position 37 in tRNAs that read codons beginning with uridine. The polypeptide is tRNA-2-methylthio-N(6)-dimethylallyladenosine synthase (Mycobacterium ulcerans (strain Agy99)).